A 129-amino-acid chain; its full sequence is Small ribosomal subunit protein eS6 (129 aa).

The disordered stretch occupies residues 53 to 88; sequence TGGSDTSGRPMRPDVRGVTTKEIMSDGGVGFEPTTD.

Belongs to the eukaryotic ribosomal protein eS6 family.

The sequence is that of Small ribosomal subunit protein eS6 (rps6e) from Haloarcula marismortui (strain ATCC 43049 / DSM 3752 / JCM 8966 / VKM B-1809) (Halobacterium marismortui).